We begin with the raw amino-acid sequence, 1045 residues long: Collagen alpha-1(VI) chain (1045 aa).

Residues Met-1–Thr-24 form the signal peptide. Positions Asp-65–Ile-255 constitute a VWFA 1 domain. The segment at Pro-277–Gly-613 is disordered. The segment at Gly-280–Gly-540 is triple-helical region. A compositionally biased stretch (low complexity) spans Pro-297–Pro-309. Basic and acidic residues predominate over residues Gln-327–Asp-360. The span at Asp-375–Thr-392 shows a compositional bias: low complexity. A compositionally biased stretch (gly residues) spans Gly-400–Gly-409. 2 consecutive short sequence motifs (cell attachment site) follow at residues Arg-501–Asp-503 and Arg-554–Asp-556. Residues Glu-600–Gly-613 show a composition bias toward pro residues. 2 VWFA domains span residues Asp-638–Val-825 and Asp-849–Ile-1035.

The protein belongs to the type VI collagen family.

It is found in the secreted. The protein resides in the extracellular space. Its subcellular location is the extracellular matrix. Collagen VI acts as a cell-binding protein. The sequence is that of Collagen alpha-1(VI) chain (col6a1) from Xenopus laevis (African clawed frog).